We begin with the raw amino-acid sequence, 317 residues long: tRNA(Met) cytidine acetate ligase (317 aa).

ATP contacts are provided by residues 6–19, G100, N157, and R182; that span reads IAEY…HIYQ.

The protein belongs to the TmcAL family.

The protein localises to the cytoplasm. It catalyses the reaction cytidine(34) in elongator tRNA(Met) + acetate + ATP = N(4)-acetylcytidine(34) in elongator tRNA(Met) + AMP + diphosphate. Catalyzes the formation of N(4)-acetylcytidine (ac(4)C) at the wobble position of elongator tRNA(Met), using acetate and ATP as substrates. First activates an acetate ion to form acetyladenylate (Ac-AMP) and then transfers the acetyl group to tRNA to form ac(4)C34. This Mesomycoplasma hyopneumoniae (strain J / ATCC 25934 / NCTC 10110) (Mycoplasma hyopneumoniae) protein is tRNA(Met) cytidine acetate ligase.